We begin with the raw amino-acid sequence, 308 residues long: Tyramine--L-glutamate ligase (308 aa).

In terms of domain architecture, ATP-grasp spans 89 to 291 (KSLLKSENID…LAELLIKNAN (203 aa)). 115–192 (TKIIESYPVK…QEFIDGENLS (78 aa)) is a binding site for ATP. Mg(2+) contacts are provided by Asp252, Glu264, and Asn266. Mn(2+)-binding residues include Asp252, Glu264, and Asn266.

It depends on Mg(2+) as a cofactor. Mn(2+) serves as cofactor.

It catalyses the reaction tyramine + L-glutamate + ATP = gamma-L-glutamyltyramine + ADP + phosphate + H(+). It participates in cofactor biosynthesis; methanofuran biosynthesis. In terms of biological role, catalyzes the formation of an amide bond between tyramine and the gamma carboxy group of L-glutamate. The enzyme also accepts phenylethylamine in vitro. This chain is Tyramine--L-glutamate ligase (mfnD), found in Methanocaldococcus jannaschii (strain ATCC 43067 / DSM 2661 / JAL-1 / JCM 10045 / NBRC 100440) (Methanococcus jannaschii).